A 141-amino-acid chain; its full sequence is Large ribosomal subunit protein uL11 (141 aa).

The protein belongs to the universal ribosomal protein uL11 family. As to quaternary structure, part of the ribosomal stalk of the 50S ribosomal subunit. Interacts with L10 and the large rRNA to form the base of the stalk. L10 forms an elongated spine to which L12 dimers bind in a sequential fashion forming a multimeric L10(L12)X complex. In terms of processing, one or more lysine residues are methylated.

Forms part of the ribosomal stalk which helps the ribosome interact with GTP-bound translation factors. The polypeptide is Large ribosomal subunit protein uL11 (Synechococcus sp. (strain CC9605)).